The sequence spans 1248 residues: Kinesin-like protein KIN-14I (1248 aa).

A MyTH4 domain is found at Phe-88–Leu-244. One can recognise an FERM domain in the interval Leu-249–Tyr-563. Residues Asn-586–Glu-659 are a coiled coil. A disordered region spans residues Glu-675 to Thr-704. Polar residues predominate over residues Lys-679 to Ser-693. Positions Val-708–Thr-799 form a coiled coil. Positions Lys-872–Ile-1193 constitute a Kinesin motor domain. Gly-953 to Thr-960 is a binding site for ATP. Positions Val-1201–Arg-1223 are calmodulin-binding. The tract at residues Ala-1220–Ser-1248 is disordered. Residues Glu-1234–Ser-1248 show a composition bias toward basic and acidic residues.

This sequence belongs to the TRAFAC class myosin-kinesin ATPase superfamily. Kinesin family. KIN-14 subfamily. As to quaternary structure, binds microtubules via its N-terminus containing the MyTH4 domain and binds F-actin via its FERM domain. Binding to calmodulin inhibits microtubule binding activity.

The protein resides in the cytoplasm. Its subcellular location is the cytoskeleton. Functionally, minus-end microtubule-dependent motor protein involved in the regulation of cell division. This Oryza sativa subsp. japonica (Rice) protein is Kinesin-like protein KIN-14I.